Consider the following 306-residue polypeptide: Probable zinc metalloprotease VDBG_06923 (306 aa).

Residues 1–28 (MNYEAEQPGANDDASGVAVALELARVLA) form the signal peptide. Zn(2+) is bound by residues aspartate 12 and glutamate 45. N-linked (GlcNAc...) asparagine glycosylation occurs at asparagine 60. Aspartate 72 serves as a coordination point for Zn(2+). Residues 218 to 306 (APAKVNNVRV…KSPVTIPFPT (89 aa)) enclose the Fibronectin type-III domain. Asparagine 228, asparagine 234, and asparagine 244 each carry an N-linked (GlcNAc...) asparagine glycan.

Belongs to the peptidase M28 family. M28B subfamily. Requires Zn(2+) as cofactor.

It is found in the secreted. In Verticillium alfalfae (strain VaMs.102 / ATCC MYA-4576 / FGSC 10136) (Verticillium wilt of alfalfa), this protein is Probable zinc metalloprotease VDBG_06923.